A 125-amino-acid chain; its full sequence is MIKIDFEKMGGLIPAVIQDNESGEVLMVAFMDEKTLNLTLESGKTWFFSRTRNKYWMKGEESGNTQDVVEVLTDCDADTVVIKVKQNGPAACHTGNRSCFYVRYENGAWVEHSNPLFDPNTVYKK.

Residue aspartate 74 participates in Mg(2+) binding. Zn(2+) is bound at residue cysteine 75. The Mg(2+) site is built by aspartate 76 and aspartate 78. Zn(2+) contacts are provided by cysteine 92 and cysteine 99.

The protein belongs to the PRA-CH family. In terms of assembly, homodimer. It depends on Mg(2+) as a cofactor. The cofactor is Zn(2+).

It is found in the cytoplasm. The enzyme catalyses 1-(5-phospho-beta-D-ribosyl)-5'-AMP + H2O = 1-(5-phospho-beta-D-ribosyl)-5-[(5-phospho-beta-D-ribosylamino)methylideneamino]imidazole-4-carboxamide. It functions in the pathway amino-acid biosynthesis; L-histidine biosynthesis; L-histidine from 5-phospho-alpha-D-ribose 1-diphosphate: step 3/9. Catalyzes the hydrolysis of the adenine ring of phosphoribosyl-AMP. This is Phosphoribosyl-AMP cyclohydrolase from Citrifermentans bemidjiense (strain ATCC BAA-1014 / DSM 16622 / JCM 12645 / Bem) (Geobacter bemidjiensis).